We begin with the raw amino-acid sequence, 438 residues long: Trigger factor (438 aa).

The PPIase FKBP-type domain occupies Asp-160–Pro-245.

The protein belongs to the FKBP-type PPIase family. Tig subfamily.

The protein localises to the cytoplasm. The enzyme catalyses [protein]-peptidylproline (omega=180) = [protein]-peptidylproline (omega=0). In terms of biological role, involved in protein export. Acts as a chaperone by maintaining the newly synthesized protein in an open conformation. Functions as a peptidyl-prolyl cis-trans isomerase. The chain is Trigger factor from Francisella philomiragia subsp. philomiragia (strain ATCC 25017 / CCUG 19701 / FSC 153 / O#319-036).